A 419-amino-acid polypeptide reads, in one-letter code: UDP-N-acetylglucosamine 1-carboxyvinyltransferase (419 aa).

22–23 lines the phosphoenolpyruvate pocket; it reads KN. UDP-N-acetyl-alpha-D-glucosamine is bound at residue Arg95. Cys119 serves as the catalytic Proton donor. At Cys119 the chain carries 2-(S-cysteinyl)pyruvic acid O-phosphothioketal. UDP-N-acetyl-alpha-D-glucosamine is bound by residues 164-167, Asp308, and Ile330; that span reads KVSV.

This sequence belongs to the EPSP synthase family. MurA subfamily.

The protein resides in the cytoplasm. It carries out the reaction phosphoenolpyruvate + UDP-N-acetyl-alpha-D-glucosamine = UDP-N-acetyl-3-O-(1-carboxyvinyl)-alpha-D-glucosamine + phosphate. The protein operates within cell wall biogenesis; peptidoglycan biosynthesis. Functionally, cell wall formation. Adds enolpyruvyl to UDP-N-acetylglucosamine. In Rickettsia peacockii (strain Rustic), this protein is UDP-N-acetylglucosamine 1-carboxyvinyltransferase.